The primary structure comprises 75 residues: MGSFSIWHWLVVLAIVLLVFGTKRLTSGAKDLGSAVKEFKKGMRDEDKPNAQLGDESRSQDASRTAQDEHDRTPR.

A helical transmembrane segment spans residues 1 to 21; the sequence is MGSFSIWHWLVVLAIVLLVFG. Residues 40 to 75 form a disordered region; the sequence is KKGMRDEDKPNAQLGDESRSQDASRTAQDEHDRTPR.

This sequence belongs to the TatA/E family. As to quaternary structure, the Tat system comprises two distinct complexes: a TatABC complex, containing multiple copies of TatA, TatB and TatC subunits, and a separate TatA complex, containing only TatA subunits. Substrates initially bind to the TatABC complex, which probably triggers association of the separate TatA complex to form the active translocon.

Its subcellular location is the cell inner membrane. Functionally, part of the twin-arginine translocation (Tat) system that transports large folded proteins containing a characteristic twin-arginine motif in their signal peptide across membranes. TatA could form the protein-conducting channel of the Tat system. In Stenotrophomonas maltophilia (strain R551-3), this protein is Sec-independent protein translocase protein TatA.